We begin with the raw amino-acid sequence, 453 residues long: Ubiquitin-associated protein 1 (453 aa).

A UMA domain is found at 19 to 65 (LDDVPFKLNEKFRCPSKVGLPIGFCLSDCNAILSDLQYDFNLERRTV). A compositionally biased stretch (basic and acidic residues) spans 83–93 (EAIRTDSESER). 3 disordered regions span residues 83-119 (EAIR…QDIV), 189-223 (LQSQ…AKTG), and 260-335 (FPKL…AGTT). Over residues 189–199 (LQSQPQSSVSP) the composition is skewed to low complexity. Polar residues predominate over residues 285 to 328 (NLSNGTPPSLQRTASNNNTTLPQEQPVFAQNGTPKQSNPVTVTS). 2 consecutive UBA domains span residues 340–381 (SPSE…LFTH) and 403–449 (GSEE…LMTR).

As to quaternary structure, component of an ESCRT-I complex (endosomal sorting complex required for transport I).

Its subcellular location is the cytoplasm. The protein localises to the cytosol. The protein resides in the endosome. In terms of biological role, component of the ESCRT-I complex, a regulator of vesicular trafficking process. Binds to ubiquitinated cargo proteins and is required for the sorting of endocytic ubiquitinated cargos into multivesicular bodies (MVBs). The chain is Ubiquitin-associated protein 1 from Danio rerio (Zebrafish).